We begin with the raw amino-acid sequence, 464 residues long: Glycine receptor subunit alpha-3 (464 aa).

An N-terminal signal peptide occupies residues 1 to 33 (MAHVRHFRTLVSGFYFWEAALLLSLVATKETNS). The Extracellular segment spans residues 34–255 (ARSRSAPMSP…RFHLERQMGY (222 aa)). N71 carries an N-linked (GlcNAc...) asparagine glycan. Residues C171 and C185 are joined by a disulfide bond. The Zn(2+) site is built by E225 and D227. A disulfide bridge connects residues C231 and C242. 235 to 240 (YNTGKF) provides a ligand contact to strychnine. A Zn(2+)-binding site is contributed by H248. Residues 256–277 (YLIQMYIPSLLIVILSWVSFWI) form a helical membrane-spanning segment. At 278–282 (NMDAA) the chain is on the cytoplasmic side. A helical membrane pass occupies residues 283 to 303 (PARVALGITTVLTMTTQSSGS). Residues 304–314 (RASLPKVSYVK) are Extracellular-facing. The chain crosses the membrane as a helical span at residues 315 to 335 (AIDIWMAVCLLFVFSALLEYA). Residues 336 to 430 (AVNFVSRQHK…FIDRAKKIDT (95 aa)) lie on the Cytoplasmic side of the membrane. The residue at position 370 (S370) is a Phosphoserine. Position 379 is a phosphoserine; by PKA (S379). Residues 431 to 451 (ISRACFPLAFLIFNIFYWVIY) traverse the membrane as a helical segment. Over 452–464 (KILRHEDIHQQQD) the chain is Extracellular.

Belongs to the ligand-gated ion channel (TC 1.A.9) family. Glycine receptor (TC 1.A.9.3) subfamily. GLRA3 sub-subfamily. Homopentamer (in vitro). Heteropentamer composed of GLRA3 and GLRB. Both homopentamers and heteropentamers form functional ion channels, but their characteristics are subtly different. Post-translationally, phosphorylated by PKA; this causes down-regulation of channel activity. Dephosphorylated in response to activation of HTR1A signaling; this increases channel activity. Detected in brainstem, also in neurons that control rhythmic breathing. Detected in superficial laminae of the dorsal horn of the thoracic spinal cord. Detected in dentate gyrus in hippocampus, especially in stratum granulare. Detected in the inner plexiform layer in the retina (at protein level). Detected in midbrain, thalamus, brain cortex, hippocampus, and at lower levels in cerebellum.

Its subcellular location is the postsynaptic cell membrane. It is found in the synapse. The protein resides in the perikaryon. The protein localises to the cell projection. It localises to the dendrite. Its subcellular location is the cell membrane. The catalysed reaction is chloride(in) = chloride(out). Its activity is regulated as follows. Inhibited by prostaglandin E2, probably via PKA-mediated phosphorylation at Ser-379. Glycine receptors are ligand-gated chloride channels. Channel opening is triggered by extracellular glycine. Channel characteristics depend on the subunit composition; heteropentameric channels display faster channel closure. Plays an important role in the down-regulation of neuronal excitability. Contributes to the generation of inhibitory postsynaptic currents. Contributes to increased pain perception in response to increased prostaglandin E2 levels. Plays a role in the regulation of breathing rhythm, especially of the duration of the postinspiratory phase. Plays a role in cellular responses to ethanol. The polypeptide is Glycine receptor subunit alpha-3 (Glra3) (Mus musculus (Mouse)).